Consider the following 538-residue polypeptide: Cryptic outer membrane porin BglH (538 aa).

Positions 1 to 25 (MFRRNLITSAILLMAPLAFSAQSLA) are cleaved as a signal peptide. The segment at 52–82 (KDEEKKKYTPATVNRSVSTNDQGYAANPFPT) is disordered. The span at 62–73 (ATVNRSVSTNDQ) shows a compositional bias: polar residues.

This sequence belongs to the porin LamB (TC 1.B.3) family. Homomonomer; no physical evidence of a homotrimer has been found, however conductance experiments suggest it may be a homotrimer. The monomer probably consists of 18 antiparallel beta-strands.

It is found in the cell outer membrane. Functionally, part of a cryptic operon that is poorly expressed in vivo. May be an ancestral sugar porin with a broad carbohydrate specificity; it binds aromatic beta-D-glucosides such as arbutin and salicin, but with low affinity compared to the binding of maltooligosaccharides to the LamB porin. The sequence is that of Cryptic outer membrane porin BglH (bglH) from Escherichia coli (strain K12).